The sequence spans 270 residues: Putative pyruvate, phosphate dikinase regulatory protein 1 (270 aa).

ADP is bound at residue 151–158 (GVSRTSKT).

This sequence belongs to the pyruvate, phosphate/water dikinase regulatory protein family. PDRP subfamily.

The enzyme catalyses N(tele)-phospho-L-histidyl/L-threonyl-[pyruvate, phosphate dikinase] + ADP = N(tele)-phospho-L-histidyl/O-phospho-L-threonyl-[pyruvate, phosphate dikinase] + AMP + H(+). It catalyses the reaction N(tele)-phospho-L-histidyl/O-phospho-L-threonyl-[pyruvate, phosphate dikinase] + phosphate + H(+) = N(tele)-phospho-L-histidyl/L-threonyl-[pyruvate, phosphate dikinase] + diphosphate. Its function is as follows. Bifunctional serine/threonine kinase and phosphorylase involved in the regulation of the pyruvate, phosphate dikinase (PPDK) by catalyzing its phosphorylation/dephosphorylation. The sequence is that of Putative pyruvate, phosphate dikinase regulatory protein 1 from Enterococcus faecalis (strain ATCC 700802 / V583).